Reading from the N-terminus, the 237-residue chain is Prospore formation at selected spindle poles protein 1 (237 aa).

The protein localises to the nucleus. It localises to the cytoplasm. Its subcellular location is the cytoskeleton. The protein resides in the microtubule organizing center. It is found in the spindle pole body. Involved in the pathway that organizes the shaping and sizing of the prospore membrane (PSM) during sporulation. Required to localize MPC54 to all four spindle pole bodies, and localize DON1 and SPO14 to four prospore membranes. The protein is Prospore formation at selected spindle poles protein 1 (PFS1) of Saccharomyces cerevisiae (strain ATCC 204508 / S288c) (Baker's yeast).